The primary structure comprises 188 residues: Elongation factor P (188 aa).

The protein belongs to the elongation factor P family.

Its subcellular location is the cytoplasm. Its pathway is protein biosynthesis; polypeptide chain elongation. Involved in peptide bond synthesis. Stimulates efficient translation and peptide-bond synthesis on native or reconstituted 70S ribosomes in vitro. Probably functions indirectly by altering the affinity of the ribosome for aminoacyl-tRNA, thus increasing their reactivity as acceptors for peptidyl transferase. This Wolbachia pipientis subsp. Culex pipiens (strain wPip) protein is Elongation factor P.